The following is a 131-amino-acid chain: Large ribosomal subunit protein bL12c (131 aa).

The protein belongs to the bacterial ribosomal protein bL12 family. As to quaternary structure, homodimer. Part of the ribosomal stalk of the 50S ribosomal subunit. Forms a multimeric L10(L12)X complex, where L10 forms an elongated spine to which 2 to 4 L12 dimers bind in a sequential fashion. Binds GTP-bound translation factors.

The protein localises to the plastid. Its subcellular location is the chloroplast. Its function is as follows. Forms part of the ribosomal stalk which helps the ribosome interact with GTP-bound translation factors. Is thus essential for accurate translation. This chain is Large ribosomal subunit protein bL12c, found in Euglena gracilis.